We begin with the raw amino-acid sequence, 509 residues long: Aspartyl/glutamyl-tRNA(Asn/Gln) amidotransferase subunit B (509 aa).

Belongs to the GatB/GatE family. GatB subfamily. In terms of assembly, heterotrimer of A, B and C subunits.

The enzyme catalyses L-glutamyl-tRNA(Gln) + L-glutamine + ATP + H2O = L-glutaminyl-tRNA(Gln) + L-glutamate + ADP + phosphate + H(+). It carries out the reaction L-aspartyl-tRNA(Asn) + L-glutamine + ATP + H2O = L-asparaginyl-tRNA(Asn) + L-glutamate + ADP + phosphate + 2 H(+). Allows the formation of correctly charged Asn-tRNA(Asn) or Gln-tRNA(Gln) through the transamidation of misacylated Asp-tRNA(Asn) or Glu-tRNA(Gln) in organisms which lack either or both of asparaginyl-tRNA or glutaminyl-tRNA synthetases. The reaction takes place in the presence of glutamine and ATP through an activated phospho-Asp-tRNA(Asn) or phospho-Glu-tRNA(Gln). The chain is Aspartyl/glutamyl-tRNA(Asn/Gln) amidotransferase subunit B from Psychrobacter cryohalolentis (strain ATCC BAA-1226 / DSM 17306 / VKM B-2378 / K5).